The primary structure comprises 390 residues: F-box/kelch-repeat protein At3g04660 (390 aa).

Residues 18-67 form the F-box domain; that stretch reads YDPSSILPLELKIEILMKSPPKSIAKLGFVSNHWSSIIRGQVFTDLYMRR. 2 Kelch repeats span residues 115–161 and 272–323; these read FSPP…FGYD and MVDH…DQRV.

As to quaternary structure, part of a SCF (ASK-cullin-F-box) protein ligase complex. Interacts with SKP1A/ASK1, SKP1B/ASK2, ASK11 and ASK13.

The protein localises to the nucleus. It functions in the pathway protein modification; protein ubiquitination. Functionally, component of SCF(ASK-cullin-F-box) E3 ubiquitin ligase complexes, which may mediate the ubiquitination and subsequent proteasomal degradation of target proteins. The sequence is that of F-box/kelch-repeat protein At3g04660 from Arabidopsis thaliana (Mouse-ear cress).